Reading from the N-terminus, the 282-residue chain is Tyrosine recombinase XerA (282 aa).

Positions Ser-2–Gly-79 constitute a Core-binding (CB) domain. One can recognise a Tyr recombinase domain in the interval Ser-95–Glu-271. Active-site residues include Arg-132, Lys-157, His-223, Arg-226, and His-249. Catalysis depends on Tyr-258, which acts as the O-(3'-phospho-DNA)-tyrosine intermediate.

The protein belongs to the 'phage' integrase family. XerA subfamily.

The protein localises to the cytoplasm. Its function is as follows. Site-specific tyrosine recombinase, which acts by catalyzing the cutting and rejoining of the recombining DNA molecules. In Thermococcus kodakarensis (strain ATCC BAA-918 / JCM 12380 / KOD1) (Pyrococcus kodakaraensis (strain KOD1)), this protein is Tyrosine recombinase XerA.